The following is a 124-amino-acid chain: MATINQLVRKPRVKKVVKSNVPALESCPQKRGVCTRVYTTTPKKPNSALRKVCRIRLTNGFEVTSYIGGEGHNLQEHSVVLIRGGRVKDLPGVRYHTVRGALDCAGVKDRKQSRSKYGVKRPKA.

3-methylthioaspartic acid is present on Asp89.

This sequence belongs to the universal ribosomal protein uS12 family. As to quaternary structure, part of the 30S ribosomal subunit. Contacts proteins S8 and S17. May interact with IF1 in the 30S initiation complex.

Functionally, with S4 and S5 plays an important role in translational accuracy. Interacts with and stabilizes bases of the 16S rRNA that are involved in tRNA selection in the A site and with the mRNA backbone. Located at the interface of the 30S and 50S subunits, it traverses the body of the 30S subunit contacting proteins on the other side and probably holding the rRNA structure together. The combined cluster of proteins S8, S12 and S17 appears to hold together the shoulder and platform of the 30S subunit. In Histophilus somni (strain 129Pt) (Haemophilus somnus), this protein is Small ribosomal subunit protein uS12.